The following is a 476-amino-acid chain: tRNA-2-methylthio-N(6)-dimethylallyladenosine synthase (476 aa).

In terms of domain architecture, MTTase N-terminal spans 5 to 122 (KKLYIKTWGC…LPEMINQVKG (118 aa)). Positions 14, 51, 85, 159, 163, and 166 each coordinate [4Fe-4S] cluster. A Radical SAM core domain is found at 145–377 (RAEGPSAFVS…QQRINQQAMS (233 aa)). Residues 380 to 443 (RAMLGSVQRI…ANSLRGKVIR (64 aa)) enclose the TRAM domain.

It belongs to the methylthiotransferase family. MiaB subfamily. As to quaternary structure, monomer. [4Fe-4S] cluster serves as cofactor.

The protein localises to the cytoplasm. It catalyses the reaction N(6)-dimethylallyladenosine(37) in tRNA + (sulfur carrier)-SH + AH2 + 2 S-adenosyl-L-methionine = 2-methylsulfanyl-N(6)-dimethylallyladenosine(37) in tRNA + (sulfur carrier)-H + 5'-deoxyadenosine + L-methionine + A + S-adenosyl-L-homocysteine + 2 H(+). Its function is as follows. Catalyzes the methylthiolation of N6-(dimethylallyl)adenosine (i(6)A), leading to the formation of 2-methylthio-N6-(dimethylallyl)adenosine (ms(2)i(6)A) at position 37 in tRNAs that read codons beginning with uridine. The sequence is that of tRNA-2-methylthio-N(6)-dimethylallyladenosine synthase from Photorhabdus laumondii subsp. laumondii (strain DSM 15139 / CIP 105565 / TT01) (Photorhabdus luminescens subsp. laumondii).